Reading from the N-terminus, the 132-residue chain is MKTVKVNIVTPDGPVYDADIEMVSVRAESGDLGILPGHIPTVAPLKIGAVRLKKDGQTELAAVSGGFLEVRPDQVTILAQAAETAESIDKERALAAKKRAEDRLNKRSDDTDIRRAELALQRAVNRLDVAGN.

It belongs to the ATPase epsilon chain family. As to quaternary structure, F-type ATPases have 2 components, CF(1) - the catalytic core - and CF(0) - the membrane proton channel. CF(1) has five subunits: alpha(3), beta(3), gamma(1), delta(1), epsilon(1). CF(0) has three main subunits: a, b and c.

The protein localises to the cell membrane. In terms of biological role, produces ATP from ADP in the presence of a proton gradient across the membrane. The chain is ATP synthase epsilon chain from Bacillus velezensis (strain DSM 23117 / BGSC 10A6 / LMG 26770 / FZB42) (Bacillus amyloliquefaciens subsp. plantarum).